Here is a 2311-residue protein sequence, read N- to C-terminus: Proto-oncogene tyrosine-protein kinase ROS (2311 aa).

A signal peptide spans 1–24 (MRNACLLLNRLGAFYFIWISAAYC). Topologically, residues 25–1873 (SFSKNCQDLC…LAKDTVTSPD (1849 aa)) are extracellular. N49, N65, N77, N123, N132, N265, N287, N307, N333, N377, N405, N480, N607, N628, N706, N714, N911, N940, N962, N971, N1110, N1154, N1180, N1233, N1255, N1282, N1316, N1470, N1509, N1588, N1628, N1682, N1696, and N1730 each carry an N-linked (GlcNAc...) asparagine glycan. Fibronectin type-III domains follow at residues 110–202 (KPGA…ASGV) and 203–294 (PTTA…PESK). The Fibronectin type-III 3 domain occupies 571–671 (LPTLPRLVTV…EPFRGMTFEE (101 aa)). 2 Fibronectin type-III domains span residues 952–1047 (VPES…APEG) and 1051–1158 (APAN…SSDI). Fibronectin type-III domains follow at residues 1459–1569 (DTEK…TLYG), 1570–1669 (VPEG…AKTF), 1671–1766 (TPLS…TTAG), and 1767–1868 (VPSK…AKDT). The segment covering 1754 to 1764 (STSSPTSFKTT) has biased composition (low complexity). Residues 1754–1786 (STSSPTSFKTTAGVPSKPGTPKRAEDSKNSVQW) are disordered. The span at 1775-1786 (KRAEDSKNSVQW) shows a compositional bias: basic and acidic residues. 3 N-linked (GlcNAc...) asparagine glycosylation sites follow: N1792, N1795, and N1822. The chain crosses the membrane as a helical span at residues 1874–1898 (ITAIVAVIGAVVLGLTIIILFGFVW). Topologically, residues 1899 to 2311 (HQRWKSRKPA…SISSAELTSV (413 aa)) are cytoplasmic. The region spanning 1961–2240 (LNLHKLLGSG…KLQEIRHSPL (280 aa)) is the Protein kinase domain. Residues 1967–1975 (LGSGAFGEV) and K1996 each bind ATP. Residue D2095 is the Proton acceptor of the active site. Phosphotyrosine; by autocatalysis is present on Y2131.

It belongs to the protein kinase superfamily. Tyr protein kinase family. Insulin receptor subfamily. As to quaternary structure, interacts with VAV3; constitutive interaction mediating VAV3 phosphorylation. In terms of tissue distribution, highest expression in kidney. Also expressed in gonad, thymus, bursa, brain and kidney.

It localises to the cell membrane. It carries out the reaction L-tyrosyl-[protein] + ATP = O-phospho-L-tyrosyl-[protein] + ADP + H(+). Orphan receptor tyrosine kinase (RTK) that may activate several downstream signaling pathways related to cell differentiation, proliferation, growth and survival including the PI3 kinase-mTOR signaling pathway. Mediates the phosphorylation of PTPN11, an activator of this pathway. May also phosphorylate and activate the transcription factor STAT3 to control anchorage-independent cell growth. Mediates the phosphorylation and the activation of VAV3, a guanine nucleotide exchange factor regulating cell morphology. May activate other downstream signaling proteins including AKT1, MAPK1, MAPK3, IRS1, and PLCG2. The sequence is that of Proto-oncogene tyrosine-protein kinase ROS (ROS1) from Gallus gallus (Chicken).